We begin with the raw amino-acid sequence, 108 residues long: Mitochondrial import inner membrane translocase subunit tim-13 (108 aa).

Positions 45–68 (CTNKCITAPGSSLASGEKQCLQRC) match the Twin CX3C motif motif. Cystine bridges form between Cys45–Cys68 and Cys49–Cys64. The disordered stretch occupies residues 89–108 (EEMASSGGMGGGFGQGPSFS). Positions 95–108 (GGMGGGFGQGPSFS) are enriched in gly residues.

Belongs to the small Tim family. Heterohexamer; composed of 3 copies of tim-8/ddp-1 and 3 copies of tin-13/tim-13, named soluble 70 kDa complex. Associates with the TIM22 complex, whose core is composed of tim-22.

It is found in the mitochondrion inner membrane. Mitochondrial intermembrane chaperone that participates in the import and insertion of some multi-pass transmembrane proteins into the mitochondrial inner membrane. Also required for the transfer of beta-barrel precursors from the TOM complex to the sorting and assembly machinery (SAM complex) of the outer membrane. Acts as a chaperone-like protein that protects the hydrophobic precursors from aggregation and guide them through the mitochondrial intermembrane space. The tim-8-tim-13 complex mediates the import of some proteins while the predominant tim-9/tin-9.1-tim-10/tin-10 70 kDa complex mediates the import of much more proteins. The polypeptide is Mitochondrial import inner membrane translocase subunit tim-13 (tin-13) (Caenorhabditis elegans).